A 366-amino-acid polypeptide reads, in one-letter code: Anthranilate phosphoribosyltransferase (366 aa).

Residues G79, 82–83 (GD), T87, 89–92 (NIST), 107–115 (KHGNRAATS), and S119 contribute to the 5-phospho-alpha-D-ribose 1-diphosphate site. Position 79 (G79) interacts with anthranilate. S91 is a binding site for Mg(2+). N110 is a binding site for anthranilate. Residue R165 coordinates anthranilate. Mg(2+) contacts are provided by D223 and E224. Residues 342–366 (ESLSGKSMSMRSRTSILSPASGERV) are disordered. Residues 345–359 (SGKSMSMRSRTSILS) show a composition bias toward polar residues.

Belongs to the anthranilate phosphoribosyltransferase family. As to quaternary structure, homodimer. It depends on Mg(2+) as a cofactor.

The enzyme catalyses N-(5-phospho-beta-D-ribosyl)anthranilate + diphosphate = 5-phospho-alpha-D-ribose 1-diphosphate + anthranilate. It functions in the pathway amino-acid biosynthesis; L-tryptophan biosynthesis; L-tryptophan from chorismate: step 2/5. In terms of biological role, catalyzes the transfer of the phosphoribosyl group of 5-phosphorylribose-1-pyrophosphate (PRPP) to anthranilate to yield N-(5'-phosphoribosyl)-anthranilate (PRA). The protein is Anthranilate phosphoribosyltransferase of Methanosarcina barkeri (strain Fusaro / DSM 804).